The primary structure comprises 257 residues: Thioredoxin-dependent peroxide reductase, mitochondrial (257 aa).

A mitochondrion-targeting transit peptide spans 1–62 (MAATAGRLFR…FAFSTSSSYH (62 aa)). The region spanning 64–222 (PAVTQHAPYF…TLRLVKAFQF (159 aa)) is the Thioredoxin domain. Lysine 84 is subject to N6-succinyllysine. At lysine 92 the chain carries N6-acetyllysine; alternate. Lysine 92 carries the post-translational modification N6-succinyllysine; alternate. Cysteine 109 functions as the Cysteine sulfenic acid (-SOH) intermediate in the catalytic mechanism. Threonine 147 is modified (phosphothreonine).

The protein belongs to the peroxiredoxin family. AhpC/Prx1 subfamily. Homodimer; disulfide-linked, upon oxidation. 6 homodimers assemble to form a ring-like dodecamer. Interacts with NEK6. Interacts with LRRK2. Interacts with MAP3K13. Interacts with RPS6KC1 (via PX domain). Post-translationally, phosphorylated by LRRK2; phosphorylation reduces perodixase activity. In terms of processing, the enzyme can be inactivated by further oxidation of the cysteine sulfenic acid (C(P)-SOH) to sulphinic acid (C(P)-SO2H) and sulphonic acid (C(P)-SO3H) instead of its condensation to a disulfide bond. S-palmitoylated. In terms of tissue distribution, predominantly expressed in adrenal cortex. Also detected in liver, renal cortex and medulla, and adrenal medulla (at protein level).

It is found in the mitochondrion matrix. The protein resides in the cytoplasm. The protein localises to the early endosome. It catalyses the reaction a hydroperoxide + [thioredoxin]-dithiol = an alcohol + [thioredoxin]-disulfide + H2O. In terms of biological role, thiol-specific peroxidase that catalyzes the reduction of hydrogen peroxide and organic hydroperoxides to water and alcohols, respectively. Plays a role in cell protection against oxidative stress by detoxifying peroxides. Acts synergistically with MAP3K13 to regulate the activation of NF-kappa-B in the cytosol. Required for the maintenance of physical strength. The chain is Thioredoxin-dependent peroxide reductase, mitochondrial (PRDX3) from Bos taurus (Bovine).